The chain runs to 194 residues: Imidazoleglycerol-phosphate dehydratase (194 aa).

It belongs to the imidazoleglycerol-phosphate dehydratase family.

The protein localises to the cytoplasm. It catalyses the reaction D-erythro-1-(imidazol-4-yl)glycerol 3-phosphate = 3-(imidazol-4-yl)-2-oxopropyl phosphate + H2O. Its pathway is amino-acid biosynthesis; L-histidine biosynthesis; L-histidine from 5-phospho-alpha-D-ribose 1-diphosphate: step 6/9. The sequence is that of Imidazoleglycerol-phosphate dehydratase from Bacillus pumilus (strain SAFR-032).